The primary structure comprises 1866 residues: Rho GTPase-activating protein 100F (1866 aa).

Disordered stretches follow at residues 22–98 (MLCC…AGVK), 262–336 (RRGN…NNYS), and 466–530 (LRSS…DTEA). Residues 59-77 (GNQQHHGNQQHHGNQQQHH) are compositionally biased toward low complexity. Positions 179 to 264 (LVEIVKRPGQ…LVLAIRQRRG (86 aa)) constitute a PDZ domain. Pro residues predominate over residues 271 to 286 (PGPPTLSRPEQKPPPV). Residues 301 to 326 (TDRMPRPRSSRDRRTGDGREMTESRS) show a composition bias toward basic and acidic residues. S719 carries the post-translational modification Phosphoserine. Residues 745–775 (AGPASPSGSILSTGGHQSPAPTPSATLPRPH) form a disordered region. Residues 750 to 760 (PSGSILSTGGH) are compositionally biased toward polar residues. A C2 domain is found at 789-908 (KLDKPIVDIG…LRQSPLHQLA (120 aa)). The Rho-GAP domain maps to 948–1148 (ADLETVVNRE…YLLQIWPQPQ (201 aa)). Disordered stretches follow at residues 1273–1328 (GGSV…QVKI), 1356–1380 (PTTQ…RRGN), 1393–1479 (SVVN…DLVS), 1514–1607 (FTPI…MVST), 1644–1727 (YTND…YGTL), and 1819–1840 (DEKP…ADKG). Over residues 1282–1292 (DPSPLPLPGTP) the composition is skewed to pro residues. Residues 1293–1302 (SPGSSSASTG) show a composition bias toward low complexity. Polar residues-rich tracts occupy residues 1356–1377 (PTTQ…TASR), 1393–1408 (SVVN…YTGS), and 1416–1429 (GNSS…NASG). Positions 1443–1479 (SSATSSSSSSQATVLSAGSTATSAPTTSSDDSDDLVS) are enriched in low complexity. Over residues 1538–1587 (QLVTPISGSSSKPGATTGAISKYTTGSVESSINANSQKLSSPSRLCNSKD) the composition is skewed to polar residues. Low complexity-rich tracts occupy residues 1590 to 1607 (SRTG…MVST) and 1644 to 1658 (YTND…SSKS). Residues 1659-1670 (GIGGGSGTGLGA) show a composition bias toward gly residues. Composition is skewed to low complexity over residues 1671–1688 (VSGA…LFGS) and 1696–1720 (GSSH…NHNT). Residues 1830 to 1839 (HGEEKLGADK) are compositionally biased toward basic and acidic residues.

As to quaternary structure, interacts (via PDZ domain) with Nrx-1; may recruit Nrx-1 to the presynaptic active zone.

Its subcellular location is the presynapse. Its function is as follows. GTPase activator for the Rho-type GTPases by converting them to an inactive GDP-bound state. Promotes the anchoring of Liprin-alpha clusters at synapses. Recruits and keeps Nrx-1 levels high in active zones in the presynapse opposite the postsynaptic region. The protein is Rho GTPase-activating protein 100F (RhoGAP100F) of Drosophila melanogaster (Fruit fly).